Here is a 568-residue protein sequence, read N- to C-terminus: Natural resistance-associated macrophage protein 2 (568 aa).

The segment covering 1-20 has biased composition (basic and acidic residues); that stretch reads MVLDPKEKMPDDGASGDHGD. A disordered region spans residues 1-45; that stretch reads MVLDPKEKMPDDGASGDHGDSASLGAINPAYSNSSLPHSTGDSEE. Topologically, residues 1–69 are cytoplasmic; that stretch reads MVLDPKEKMP…EEYSCFSFRK (69 aa). A compositionally biased stretch (polar residues) spans 30–40; the sequence is AYSNSSLPHST. A helical membrane pass occupies residues 70-90; the sequence is LWAFTGPGFLMSIAYLDPGNI. Topologically, residues 91 to 95 are extracellular; it reads ESDLQ. The chain crosses the membrane as a helical span at residues 96–117; it reads SGAVAGFKLLWVLLLATIVGLL. Residues 118-154 are Cytoplasmic-facing; that stretch reads LQRLAARLGVVTGLHLAEVCHRQYPKVPRIILWLMVE. The helical transmembrane segment at 155–175 threads the bilayer; that stretch reads LAIIGSDMQEVIGSAIAINLL. Over 176–179 the chain is Extracellular; it reads SAGR. A helical transmembrane segment spans residues 180–194; it reads VPLWGGVLITIADTF. The Cytoplasmic segment spans residues 195–208; it reads VFLFLDKYGLRKLE. The chain crosses the membrane as a helical span at residues 209-229; it reads AFFGFLITIMALTFGYEYITV. Topologically, residues 230-255 are extracellular; it reads KPSQSQVLRGMFVPSCPGCRTPQVEQ. A helical membrane pass occupies residues 256-276; that stretch reads AVGIVGAVIMPHNMYLHSALV. Over 277 to 301 the chain is Cytoplasmic; sequence KSRQVNRANKQEVREANKYFFIESC. A helical transmembrane segment spans residues 302-322; the sequence is IALFVSFIINVFVVSVFAEAF. The Extracellular segment spans residues 323 to 360; it reads FEKTNKQVVEVCKNNSSPHADLFPSDNSTLAVDIYKGG. Residues Asn-336 and Asn-349 are each glycosylated (N-linked (GlcNAc...) asparagine). The helical transmembrane segment at 361 to 381 threads the bilayer; the sequence is VVLGCYFGPAALYIWAVGILA. Topologically, residues 382–408 are cytoplasmic; it reads AGQSSTMTGTYSGQFVMEGFLNLKWSR. Residues 409-429 traverse the membrane as a helical segment; it reads FARVILTRSIAIIPTLLVAVF. The Extracellular portion of the chain corresponds to 430-440; the sequence is QDVEHLTGMND. The helical transmembrane segment at 441 to 461 threads the bilayer; the sequence is FLNVLQSLQLPFALIPILTFT. The Cytoplasmic portion of the chain corresponds to 462–482; that stretch reads SLRPVMSEFSNGIGWRIAGGI. The chain crosses the membrane as a helical span at residues 483–503; the sequence is LVLIVCSINMYFVVVYVQELG. The Extracellular portion of the chain corresponds to 504–506; sequence HVA. A helical membrane pass occupies residues 507–527; sequence LYVVAAVVSVAYLTFVFYLGW. Topologically, residues 528–568 are cytoplasmic; sequence QCLIALGLSFLDCGRSYRLGLTAQPELYLLNTVDADSVVSR. Positions 555–559 are required for early endosome targeting; the sequence is YLLNT. Leu-556, Ser-564, and Ser-567 each carry phosphoserine.

This sequence belongs to the NRAMP family. Forms a complex with NDFIP1 and NEDD4L, in cortical neurons, in response to iron and cobalt exposure; this interaction leads to SLC11A2 ubiquitination by NEDD4L and proteasome-dependent degradation. Interacts with NDFIP1, NDFIP2 and WWP2; this interaction leads to SLC11A2 ubiquitination by WWP2 and subsequent proteasome-dependent degradation. Interacts with COX2 and TOM6 at the outer mitochondrion membrane. Interacts with ARRDC1; this interaction regulates the incorporation of SLC11A2 into extracellular vesicles through an ubiquitination-dependent mechanism. Interacts with ARRDC4; controls the incorporation of SLC11A2 into extracellular vesicles through an ubiquitination-dependent mechanism. Post-translationally, ubiquitinated by WWP2. In terms of processing, N-glycosylated. As to expression, abundantly expressed in erythroid precursor cells (at protein level). In terms of tissue distribution, expressed in duodenum (at protein level).

The protein resides in the golgi apparatus. It is found in the trans-Golgi network membrane. Its subcellular location is the early endosome membrane. The protein localises to the recycling endosome membrane. It localises to the cell membrane. The protein resides in the late endosome membrane. It is found in the lysosome membrane. Its subcellular location is the apical cell membrane. The protein localises to the mitochondrion outer membrane. It localises to the extracellular vesicle membrane. It carries out the reaction Fe(2+)(in) + H(+)(in) = Fe(2+)(out) + H(+)(out). The enzyme catalyses Co(2+)(out) + H(+)(out) = Co(2+)(in) + H(+)(in). The catalysed reaction is Cd(2+)(out) + H(+)(out) = Cd(2+)(in) + H(+)(in). It catalyses the reaction Mn(2+)(in) + H(+)(in) = Mn(2+)(out) + H(+)(out). It carries out the reaction Zn(2+)(out) + H(+)(out) = Zn(2+)(in) + H(+)(in). The enzyme catalyses Ni(2+)(out) + H(+)(out) = Ni(2+)(in) + H(+)(in). The catalysed reaction is H(+)(in) = H(+)(out). It catalyses the reaction Fe(2+)(in) = Fe(2+)(out). Its function is as follows. Proton-coupled metal ion symporter operating with a proton to metal ion stoichiometry of 1:1. Selectively transports various divalent metal cations, in decreasing affinity: Cd(2+) &gt; Fe(2+) &gt; Co(2+), Mn(2+) &gt;&gt; Zn(2+), Ni(2+), VO(2+). Essential for maintenance of iron homeostasis by modulating intestinal absorption of dietary Fe(2+) and TF-associated endosomal Fe(2+) transport in erythroid precursors and other cells. Enables Fe(2+) and Mn(2+) ion entry into mitochondria, and is thus expected to promote mitochondrial heme synthesis, iron-sulfur cluster biogenesis and antioxidant defense. Can mediate uncoupled fluxes of either protons or metal ions. The protein is Natural resistance-associated macrophage protein 2 (Slc11a2) of Mus musculus (Mouse).